The sequence spans 95 residues: uncharacterized protein (95 aa).

A helical transmembrane segment spans residues 45–65 (WLSGLAFVLQAALVMPVVLAF).

Its subcellular location is the membrane. This is an uncharacterized protein from Mycobacterium leprae (strain TN).